Consider the following 713-residue polypeptide: Undecaprenyl-diphosphooligosaccharide--protein glycotransferase (713 aa).

Residues 1–11 (MLKKEYLKNPY) are Cytoplasmic-facing. The helical transmembrane segment at 12 to 35 (LVLFAMIVLAYVFSVFCRFYWVWW) threads the bilayer. Topologically, residues 36 to 96 (ASEFNEYFFN…YWLYKITPFS (61 aa)) are periplasmic. The DXD motif 1 motif lies at 52 to 54 (SND). Position 54 (D54) interacts with Mn(2+). The helical transmembrane segment at 97–122 (FESIILYMSTFLSSLVVIPIILLANE) threads the bilayer. Topologically, residues 123–125 (YKR) are cytoplasmic. Residues 126-144 (PLMGFVAALLASVANSYYN) form a helical membrane-spanning segment. Residues 145-152 (RTMSGYYD) lie on the Periplasmic side of the membrane. D152 contacts Mn(2+). Positions 152–154 (DTD) match the DXD motif 2 motif. The helical transmembrane segment at 153–174 (TDMLVIVLPMFILFFMVRMILK) threads the bilayer. The Cytoplasmic segment spans residues 175 to 176 (KD). Residues 177 to 192 (FFSLIALPLFIGIYLW) traverse the membrane as a helical segment. Topologically, residues 193 to 197 (WYPSS) are periplasmic. Residue 194–196 (YPS) participates in [alpha-D-GalNAc-(1-&gt;4)]2-[beta-D-Glc-(1-&gt;3)]-[alpha-D-GalNAc-(1-&gt;4)]2-alpha-D-GalNAc-(1-&gt;3)-alpha-D-diNAcBac-tri-trans,hepta-cis-undecaprenyl diphosphate binding. Residues 198–215 (YTLNVALIGLFLIYTLIF) traverse the membrane as a helical segment. The Cytoplasmic portion of the chain corresponds to 216–220 (HRKEK). A helical membrane pass occupies residues 221–233 (IFYIAVILSSLTL). The Periplasmic segment spans residues 234–237 (SNIA). A helical transmembrane segment spans residues 238–254 (WFYQSAIIVILFALFAL). The Cytoplasmic portion of the chain corresponds to 255 to 260 (EQKRLN). A helical transmembrane segment spans residues 261–278 (FMIIGILGSATLIFLILS). At 279–324 (GGVDPILYQLKFYIFRSDESANLTQGFMYFNVNQTIQEVENVDFSE) the chain is on the periplasmic side. Y291 lines the [alpha-D-GalNAc-(1-&gt;4)]2-[beta-D-Glc-(1-&gt;3)]-[alpha-D-GalNAc-(1-&gt;4)]2-alpha-D-GalNAc-(1-&gt;3)-alpha-D-diNAcBac-tri-trans,hepta-cis-undecaprenyl diphosphate pocket. The TIXE motif signature appears at 313–316 (TIQE). A Mn(2+)-binding site is contributed by E316. Residues 325 to 347 (FMRRISGSEIVFLFSLFGFVWLL) traverse the membrane as a helical segment. Topologically, residues 348–352 (RKHKS) are cytoplasmic. A helical transmembrane segment spans residues 353–369 (MIMALPILVLGFLALKG). At 370–373 (GLRF) the chain is on the periplasmic side. [alpha-D-GalNAc-(1-&gt;4)]2-[beta-D-Glc-(1-&gt;3)]-[alpha-D-GalNAc-(1-&gt;4)]2-alpha-D-GalNAc-(1-&gt;3)-alpha-D-diNAcBac-tri-trans,hepta-cis-undecaprenyl diphosphate is bound at residue R372. A helical membrane pass occupies residues 374–396 (TIYSVPVMALGFGFLLSEFKAIL). The Cytoplasmic segment spans residues 397-406 (VKKYSQLTSN). A helical transmembrane segment spans residues 407-427 (VCIVFATILTLAPVFIHIYNY). Over 428–713 (KAPTVFSQNE…RDAKVFKLKI (286 aa)) the chain is Periplasmic. The segment at 457 to 459 (WWD) is interacts with target acceptor peptide in protein substrate. Residues 457 to 461 (WWDYG) carry the WWDYG motif motif. Y462 is a [alpha-D-GalNAc-(1-&gt;4)]2-[beta-D-Glc-(1-&gt;3)]-[alpha-D-GalNAc-(1-&gt;4)]2-alpha-D-GalNAc-(1-&gt;3)-alpha-D-diNAcBac-tri-trans,hepta-cis-undecaprenyl diphosphate binding site. N534 carries an N-linked (DATDGlc) asparagine glycan. Residues 568–575 (MSLIFSTV) carry the MI motif motif.

This sequence belongs to the STT3 family. It depends on Mg(2+) as a cofactor. Requires Mn(2+) as cofactor.

The protein resides in the cell inner membrane. It catalyses the reaction tritrans,heptacis-undecaprenyl diphosphooligosaccharide + [protein]-L-asparagine = tritrans,heptacis-undecaprenyl diphosphate + a glycoprotein with the oligosaccharide chain attached by N-beta-D-glycosyl linkage to protein L-asparagine.. The protein operates within protein modification; protein glycosylation. Oligosaccharyl transferase (OST) that catalyzes the initial transfer of a defined glycan (GalNAc(2)GlcGalNAc(3)Bac(NAc)(2) in eubacteria, where Bac(NAc)(2) is di-N-acetyl bacillosamine) from the lipid carrier undecaprenol-pyrophosphate to an asparagine residue within an Asp/Glu-Asn-X-Ser/Thr consensus motif in nascent polypeptide chains, the first step in protein N-glycosylation. In Campylobacter jejuni subsp. jejuni serotype O:2 (strain ATCC 700819 / NCTC 11168), this protein is Undecaprenyl-diphosphooligosaccharide--protein glycotransferase (pglB).